The following is a 477-amino-acid chain: Glycogen synthase (477 aa).

Residue Lys15 participates in ADP-alpha-D-glucose binding.

This sequence belongs to the glycosyltransferase 1 family. Bacterial/plant glycogen synthase subfamily.

The enzyme catalyses [(1-&gt;4)-alpha-D-glucosyl](n) + ADP-alpha-D-glucose = [(1-&gt;4)-alpha-D-glucosyl](n+1) + ADP + H(+). Its pathway is glycan biosynthesis; glycogen biosynthesis. Synthesizes alpha-1,4-glucan chains using ADP-glucose. This is Glycogen synthase from Citrobacter koseri (strain ATCC BAA-895 / CDC 4225-83 / SGSC4696).